A 208-amino-acid chain; its full sequence is Recombination protein RecR (208 aa).

The C4-type zinc-finger motif lies at 60 to 75 (CKVCHNICDDEVCSIC). In terms of domain architecture, Toprim spans 83–178 (SLVCVVENIK…RISVIARGVS (96 aa)).

Belongs to the RecR family.

In terms of biological role, may play a role in DNA repair. It seems to be involved in an RecBC-independent recombinational process of DNA repair. It may act with RecF and RecO. This is Recombination protein RecR from Parabacteroides distasonis (strain ATCC 8503 / DSM 20701 / CIP 104284 / JCM 5825 / NCTC 11152).